The sequence spans 413 residues: Serine hydroxymethyltransferase (413 aa).

(6S)-5,6,7,8-tetrahydrofolate-binding positions include Leu-117 and 121–123 (GHL). Lys-226 is modified (N6-(pyridoxal phosphate)lysine). Residues Glu-239 and 349–351 (SPF) each bind (6S)-5,6,7,8-tetrahydrofolate.

Belongs to the SHMT family. As to quaternary structure, homodimer. The cofactor is pyridoxal 5'-phosphate.

It is found in the cytoplasm. The enzyme catalyses (6R)-5,10-methylene-5,6,7,8-tetrahydrofolate + glycine + H2O = (6S)-5,6,7,8-tetrahydrofolate + L-serine. The protein operates within one-carbon metabolism; tetrahydrofolate interconversion. It participates in amino-acid biosynthesis; glycine biosynthesis; glycine from L-serine: step 1/1. Catalyzes the reversible interconversion of serine and glycine with tetrahydrofolate (THF) serving as the one-carbon carrier. This reaction serves as the major source of one-carbon groups required for the biosynthesis of purines, thymidylate, methionine, and other important biomolecules. Also exhibits THF-independent aldolase activity toward beta-hydroxyamino acids, producing glycine and aldehydes, via a retro-aldol mechanism. In Bacillus cereus (strain AH187), this protein is Serine hydroxymethyltransferase.